The primary structure comprises 185 residues: Adenylate kinase (185 aa).

Residue 8-16 (GIPGSGSTT) participates in ATP binding.

Belongs to the archaeal adenylate kinase family.

The protein localises to the cytoplasm. It carries out the reaction AMP + ATP = 2 ADP. The protein is Adenylate kinase (adkA) of Methanothermobacter thermautotrophicus (strain ATCC 29096 / DSM 1053 / JCM 10044 / NBRC 100330 / Delta H) (Methanobacterium thermoautotrophicum).